A 657-amino-acid chain; its full sequence is Interferon-induced GTP-binding protein Mx1 (657 aa).

Position 1 is an N-acetylmethionine (Met1). The Dynamin-type G domain maps to 63 to 336 (DLALPAIAVI…LITHICKTLP (274 aa)). The segment at 73-80 (GDQSSGKS) is G1 motif. Position 73-80 (73-80 (GDQSSGKS)) interacts with GTP. The G2 motif stretch occupies residues 98–100 (VTR). Residues 174-177 (DLPG) form a G3 motif region. GTP is bound by residues 174–178 (DLPGI) and 243–246 (TKPD). Residues 243-246 (TKPD) are G4 motif. Residues 275–278 (KCRG) form a G5 motif region. Positions 337–362 (LLENQIKENHEKITEELQKYGSDVPE) are bundle signaling element (BSE). The segment at 362–529 (EDEHEKMFFL…HFQMEQIVYC (168 aa)) is middle domain. The interval 363–627 (DEHEKMFFLI…KDTYSWLLKE (265 aa)) is stalk. A compositionally biased stretch (basic and acidic residues) spans 540-551 (RVREKDSDEEKK). The interval 540-559 (RVREKDSDEEKKKKTSSMSH) is disordered. The tract at residues 550 to 553 (KKKK) is critical for lipid-binding. Residues 569-657 (LSEILEHLLA…ARRRLAKFPG (89 aa)) form the GED domain.

It belongs to the TRAFAC class dynamin-like GTPase superfamily. Dynamin/Fzo/YdjA family. As to quaternary structure, homooligomer. Oligomerizes into multimeric filamentous or ring-like structures by virtue of its stalk domain. Oligomerization is critical for GTPase activity, protein stability, and recognition of viral target structures. Interacts with TRPC1, TRPC3, TRPC4, TRPC5, TRPC6 and TRPC7. Interacts with HSPA5. Interacts with TUBB/TUBB5. Interacts with DDX39A and DDX39B. ISGylated.

Its subcellular location is the cytoplasm. The protein resides in the endoplasmic reticulum membrane. The protein localises to the perinuclear region. Its function is as follows. Interferon-induced dynamin-like GTPase with antiviral activity. The protein is Interferon-induced GTP-binding protein Mx1 (MX1) of Canis lupus familiaris (Dog).